Consider the following 598-residue polypeptide: Aspartate--tRNA ligase (598 aa).

Glu182 serves as a coordination point for L-aspartate. The segment at 206-209 (QLFK) is aspartate. Arg228 is a binding site for L-aspartate. ATP contacts are provided by residues 228–230 (RDE) and Gln237. His456 is a binding site for L-aspartate. Glu490 lines the ATP pocket. Arg497 is a binding site for L-aspartate. 542–545 (GVDR) contributes to the ATP binding site.

The protein belongs to the class-II aminoacyl-tRNA synthetase family. Type 1 subfamily. As to quaternary structure, homodimer.

Its subcellular location is the cytoplasm. The catalysed reaction is tRNA(Asp) + L-aspartate + ATP = L-aspartyl-tRNA(Asp) + AMP + diphosphate. Its function is as follows. Catalyzes the attachment of L-aspartate to tRNA(Asp) in a two-step reaction: L-aspartate is first activated by ATP to form Asp-AMP and then transferred to the acceptor end of tRNA(Asp). The protein is Aspartate--tRNA ligase of Agathobacter rectalis (strain ATCC 33656 / DSM 3377 / JCM 17463 / KCTC 5835 / VPI 0990) (Eubacterium rectale).